A 273-amino-acid chain; its full sequence is Nitrogenase iron protein (273 aa).

8 to 15 (GKGGIGKS) contacts ATP. Cysteine 94 is a binding site for [4Fe-4S] cluster. Arginine 97 is subject to ADP-ribosylarginine; by dinitrogenase reductase ADP-ribosyltransferase. Cysteine 130 provides a ligand contact to [4Fe-4S] cluster.

The protein belongs to the NifH/BchL/ChlL family. As to quaternary structure, homodimer. [4Fe-4S] cluster is required as a cofactor. Post-translationally, the reversible ADP-ribosylation of Arg-97 inactivates the nitrogenase reductase and regulates nitrogenase activity.

It carries out the reaction N2 + 8 reduced [2Fe-2S]-[ferredoxin] + 16 ATP + 16 H2O = H2 + 8 oxidized [2Fe-2S]-[ferredoxin] + 2 NH4(+) + 16 ADP + 16 phosphate + 6 H(+). Its function is as follows. The key enzymatic reactions in nitrogen fixation are catalyzed by the nitrogenase complex, which has 2 components: the iron protein and the molybdenum-iron protein. This chain is Nitrogenase iron protein, found in Desulforapulum autotrophicum (strain ATCC 43914 / DSM 3382 / VKM B-1955 / HRM2) (Desulfobacterium autotrophicum).